The chain runs to 78 residues: Serine rich endogenous peptide 19 (78 aa).

An N-terminal signal peptide occupies residues methionine 1–alanine 25. An SCOOP motif motif is present at residues lysine 50–arginine 64. Positions serine 56–serine 58 match the SxS motif essential for MIK2 binding motif. A disordered region spans residues cysteine 57–proline 78. Over residues asparagine 69–proline 78 the composition is skewed to pro residues.

This sequence belongs to the serine rich endogenous peptide (SCOOP) phytocytokine family. In terms of assembly, interacts with MIK2 (via extracellular leucine-rich repeat domain); this interaction triggers the formation of complex between MIK2 and the BAK1/SERK3 and SERK4 coreceptors, and subsequent BAK1 activation by phosphorylation.

The protein localises to the cell membrane. It localises to the secreted. It is found in the extracellular space. Its subcellular location is the apoplast. Brassicaceae-specific phytocytokine (plant endogenous peptide released into the apoplast) perceived by MIK2 in a BAK1/SERK3 and SERK4 coreceptors-dependent manner, that modulates various physiological and antimicrobial processes including growth prevention and reactive oxygen species (ROS) response regulation. The polypeptide is Serine rich endogenous peptide 19 (Arabidopsis thaliana (Mouse-ear cress)).